Consider the following 401-residue polypeptide: Probable 2,3-bisphosphoglycerate-independent phosphoglycerate mutase (401 aa).

This sequence belongs to the BPG-independent phosphoglycerate mutase family. A-PGAM subfamily.

The catalysed reaction is (2R)-2-phosphoglycerate = (2R)-3-phosphoglycerate. Its pathway is carbohydrate degradation; glycolysis; pyruvate from D-glyceraldehyde 3-phosphate: step 3/5. In terms of biological role, catalyzes the interconversion of 2-phosphoglycerate and 3-phosphoglycerate. In Thermotoga maritima (strain ATCC 43589 / DSM 3109 / JCM 10099 / NBRC 100826 / MSB8), this protein is Probable 2,3-bisphosphoglycerate-independent phosphoglycerate mutase.